Consider the following 265-residue polypeptide: Mlc titration factor A (265 aa).

4 residues coordinate Zn(2+): H111, H148, H152, and E211.

The protein belongs to the MtfA family. Interacts with Mlc. Zn(2+) serves as cofactor.

It localises to the cytoplasm. Functionally, involved in the modulation of the activity of the glucose-phosphotransferase system (glucose-PTS). Interacts with the transcriptional repressor Mlc, preventing its interaction with DNA and leading to the modulation of expression of genes regulated by Mlc, including ptsG, which encodes the PTS system glucose-specific EIICB component. In terms of biological role, shows zinc-dependent metallopeptidase activity. The polypeptide is Mlc titration factor A (Salmonella typhi).